The following is a 437-amino-acid chain: 3-deoxy-D-manno-octulosonic acid transferase (437 aa).

A helical; Signal-anchor membrane pass occupies residues 16-36 (VVLVCAFVIALPKLLYKMLVY). The Proton acceptor role is filled by Glu-70. Residues 279-280 (PR), 319-321 (IGL), and 346-349 (NLLE) contribute to the CMP site.

It belongs to the glycosyltransferase group 1 family. Glycosyltransferase 30 subfamily.

It localises to the cell inner membrane. The catalysed reaction is lipid IVA (E. coli) + CMP-3-deoxy-beta-D-manno-octulosonate = alpha-Kdo-(2-&gt;6)-lipid IVA (E. coli) + CMP + H(+). The enzyme catalyses alpha-Kdo-(2-&gt;6)-lipid IVA (E. coli) + CMP-3-deoxy-beta-D-manno-octulosonate = alpha-Kdo-(2-&gt;4)-alpha-Kdo-(2-&gt;6)-lipid IVA (E. coli) + CMP + H(+). It catalyses the reaction alpha-Kdo-(2-&gt;4)-alpha-Kdo-(2-&gt;6)-lipid IVA (E. coli) + CMP-3-deoxy-beta-D-manno-octulosonate = alpha-Kdo-(2-&gt;8)-alpha-Kdo-(2-&gt;4)-alpha-Kdo-(2-&gt;6)-lipid IVA (E. coli) + CMP + H(+). The protein operates within bacterial outer membrane biogenesis; LPS core biosynthesis. Involved in lipopolysaccharide (LPS) biosynthesis. Catalyzes the transfer of three 3-deoxy-D-manno-octulosonate (Kdo) residues from CMP-Kdo to lipid IV(A), the tetraacyldisaccharide-1,4'-bisphosphate precursor of lipid A. Thus generates the genus-specific LPS epitope of Chlamydia, composed of the trisaccharide alpha-Kdo-(2-&gt;8)-alpha-Kdo-(2-&gt;4)-alpha-Kdo. The chain is 3-deoxy-D-manno-octulosonic acid transferase (waaA) from Chlamydia pneumoniae (Chlamydophila pneumoniae).